The sequence spans 181 residues: Ribosome-recycling factor (181 aa).

The protein belongs to the RRF family.

The protein resides in the cytoplasm. Functionally, responsible for the release of ribosomes from messenger RNA at the termination of protein biosynthesis. May increase the efficiency of translation by recycling ribosomes from one round of translation to another. The protein is Ribosome-recycling factor of Tropheryma whipplei (strain TW08/27) (Whipple's bacillus).